A 100-amino-acid polypeptide reads, in one-letter code: Large ribosomal subunit protein bL28 (100 aa).

This sequence belongs to the bacterial ribosomal protein bL28 family.

This chain is Large ribosomal subunit protein bL28, found in Ehrlichia chaffeensis (strain ATCC CRL-10679 / Arkansas).